We begin with the raw amino-acid sequence, 347 residues long: Probable ribonucleotide transport ATP-binding protein mkl (347 aa).

Positions 16–252 (IEVKGLTKSF…DEPVVRQFLN (237 aa)) constitute an ABC transporter domain. 48–55 (GPSGTGKS) serves as a coordination point for ATP.

Belongs to the ABC transporter superfamily.

Not known, could be involved in the transport of ribonucleotides. The polypeptide is Probable ribonucleotide transport ATP-binding protein mkl (mkl) (Mycobacterium leprae (strain TN)).